Consider the following 869-residue polypeptide: Protein translocase subunit SecA (869 aa).

Residues Gln85, 103 to 107 (GEGKT), and Asp508 contribute to the ATP site.

The protein belongs to the SecA family. In terms of assembly, monomer and homodimer. Part of the essential Sec protein translocation apparatus which comprises SecA, SecYEG and auxiliary proteins SecDF. Other proteins may also be involved.

It is found in the cell membrane. It localises to the cytoplasm. The catalysed reaction is ATP + H2O + cellular proteinSide 1 = ADP + phosphate + cellular proteinSide 2.. Its function is as follows. Part of the Sec protein translocase complex. Interacts with the SecYEG preprotein conducting channel. Has a central role in coupling the hydrolysis of ATP to the transfer of proteins into and across the cell membrane, serving as an ATP-driven molecular motor driving the stepwise translocation of polypeptide chains across the membrane. This Deinococcus geothermalis (strain DSM 11300 / CIP 105573 / AG-3a) protein is Protein translocase subunit SecA.